Here is a 118-residue protein sequence, read N- to C-terminus: U16-barytoxin-Tl1c (118 aa).

A signal peptide spans 1 to 16 (MKTIIVFLSFLVLVLA). Residues 17–76 (TKFGDANEGVNREQTKEVIQNEFRGDFLNEMAAMSLLQQLEAIESALLEKEADRNSRQKR) constitute a propeptide that is removed on maturation. 3 disulfides stabilise this stretch: Cys77-Cys92, Cys84-Cys97, and Cys91-Cys112.

Belongs to the neurotoxin 14 (magi-1) family. 06 (ICK-Trit) subfamily. As to expression, expressed by the venom gland.

It localises to the secreted. Functionally, ion channel inhibitor. The protein is U16-barytoxin-Tl1c of Trittame loki (Brush-footed trapdoor spider).